We begin with the raw amino-acid sequence, 317 residues long: uncharacterized protein (317 aa).

One can recognise an HTH lysR-type domain in the interval 1-60 (MKHELSSMKAFVILAESSSFNNAAKLLNITQPALTRRIKKMEEDLHVQLFERTTRKVTLT). The segment at residues 20 to 40 (FNNAAKLLNITQPALTRRIKK) is a DNA-binding region (H-T-H motif).

It belongs to the LysR transcriptional regulatory family.

This is an uncharacterized protein from Escherichia coli (strain K12).